Reading from the N-terminus, the 103-residue chain is MQNQQIRIRLKAFDHRLIDQSTQEIVETAKRTGAQVRGPIPLPTRKERFTVLISPHVNKDARDQYEIRTHKRVLDIVQPTDKTVDALMKLDLAAGVEVQISLG.

It belongs to the universal ribosomal protein uS10 family. Part of the 30S ribosomal subunit.

In terms of biological role, involved in the binding of tRNA to the ribosomes. The protein is Small ribosomal subunit protein uS10 of Pseudomonas aeruginosa (strain LESB58).